The following is a 264-amino-acid chain: O-methyltransferase resE (264 aa).

S-adenosyl-L-methionine-binding residues include Gln97 and His142.

This sequence belongs to the methyltransferase superfamily.

It carries out the reaction desmethylrestrictinol + S-adenosyl-L-methionine = restrictinol + S-adenosyl-L-homocysteine + H(+). The protein operates within antifungal biosynthesis. Its function is as follows. O-methyltransferase; part of the gene cluster that mediates the biosynthesis of the tetrahydropyranyl antifungal agent restricticin that acts as an inhibitor of CYP51 and blocks the ergosterol biosynthesis. Within the pathway, resE uses S-adenosylmethionine to methylate position C4 of desmethylrestrictinol to produce restrictinol. The highly reducing polyketide synthase resH, the short chain dehydrogenase resG, the cyclase resF, the FAD-dependent monooxygenase resA and the enoylreductase resD are required to generate the first stable intermediate desmethylrestrictinol. ResH with resD biosynthesize the first polyketide chain intermediate that is reduced by resG, followed by epoxidation by resA before 6-endo cyclization via epoxide opening by resF leads to desmethylrestrictinol. The methyltransferase resE then catalyzes the C4 O-methylation of desmethylrestrictinol to produce restrictinol, and the nonribosomal peptide synthetase resC catalyzes the C3 esterification of restrictinol with glycine that leads to restricticin. The polypeptide is O-methyltransferase resE (Aspergillus sclerotiorum).